The sequence spans 122 residues: Biogenesis of lysosome-related organelles complex 1 subunit BLS1 (122 aa).

Position 33 is a phosphoserine (serine 33).

It belongs to the BLOC1S1 family. As to quaternary structure, component of the biogenesis of lysosome-related organelles complex-1 (BLOC-1) composed of at least BLI1, BLS1, CNL1, KXD1, SNN1 and VAB2.

The protein localises to the endosome. Component of the biogenesis of lysosome-related organelles complex-1 (BLOC-1), a complex involved in endosomal cargo sorting. The sequence is that of Biogenesis of lysosome-related organelles complex 1 subunit BLS1 (BLS1) from Saccharomyces cerevisiae (strain YJM789) (Baker's yeast).